The primary structure comprises 443 residues: 3-phosphoshikimate 1-carboxyvinyltransferase (443 aa).

The 3-phosphoshikimate site is built by K24, S25, and R29. A phosphoenolpyruvate-binding site is contributed by K24. Residues G96 and R124 each contribute to the phosphoenolpyruvate site. Positions 168, 170, 316, and 343 each coordinate 3-phosphoshikimate. Position 170 (Q170) interacts with phosphoenolpyruvate. The Proton acceptor role is filled by D316. Positions 347 and 391 each coordinate phosphoenolpyruvate.

Belongs to the EPSP synthase family. Monomer.

It is found in the cytoplasm. The catalysed reaction is 3-phosphoshikimate + phosphoenolpyruvate = 5-O-(1-carboxyvinyl)-3-phosphoshikimate + phosphate. Its pathway is metabolic intermediate biosynthesis; chorismate biosynthesis; chorismate from D-erythrose 4-phosphate and phosphoenolpyruvate: step 6/7. Catalyzes the transfer of the enolpyruvyl moiety of phosphoenolpyruvate (PEP) to the 5-hydroxyl of shikimate-3-phosphate (S3P) to produce enolpyruvyl shikimate-3-phosphate and inorganic phosphate. The polypeptide is 3-phosphoshikimate 1-carboxyvinyltransferase (Dichelobacter nodosus (Bacteroides nodosus)).